The sequence spans 985 residues: Probable oxidoreductase YjgC (985 aa).

One can recognise a 2Fe-2S ferredoxin-type domain in the interval 3 to 79; that stretch reads GKKTITINGV…GDVIDTLSPD (77 aa). [2Fe-2S] cluster is bound by residues C37, C48, C51, and C63. The region spanning 79–119 is the 4Fe-4S His(Cys)3-ligated-type domain; it reads DVKKAQVIGMDKILYNHELYCTVCDYNNGGCEIHNTVKEMK. Positions 95, 99, 102, 109, 148, 151, 154, 158, 191, 194, 197, 201, 265, 268, 272, and 300 each coordinate [4Fe-4S] cluster. 4Fe-4S ferredoxin-type domains are found at residues 139-170 and 182-211; these read PFYRYDPDQCILCGRCVEACQDVQVTETLTID and NDVPINESSCVSCGHCSTVCPCNAMMEKGM. The 4Fe-4S Mo/W bis-MGD-type domain occupies 258 to 314; the sequence is IKKTKTVCTYCGVGCSFDVWTKGRDILKVEPQEEAPANGISTCVKGKFGWDFVNSEE.

The protein in the C-terminal section; belongs to the prokaryotic molybdopterin-containing oxidoreductase family. Requires [2Fe-2S] cluster as cofactor. The cofactor is [4Fe-4S] cluster. Mo-bis(molybdopterin guanine dinucleotide) is required as a cofactor.

The protein is Probable oxidoreductase YjgC (yjgC) of Bacillus subtilis (strain 168).